The primary structure comprises 219 residues: NAD(P)H-quinone oxidoreductase subunit K 2 (219 aa).

[4Fe-4S] cluster contacts are provided by Cys-53, Cys-54, Cys-118, and Cys-149.

The protein belongs to the complex I 20 kDa subunit family. As to quaternary structure, NDH-1 can be composed of about 15 different subunits; different subcomplexes with different compositions have been identified which probably have different functions. Requires [4Fe-4S] cluster as cofactor.

It is found in the cellular thylakoid membrane. It catalyses the reaction a plastoquinone + NADH + (n+1) H(+)(in) = a plastoquinol + NAD(+) + n H(+)(out). The enzyme catalyses a plastoquinone + NADPH + (n+1) H(+)(in) = a plastoquinol + NADP(+) + n H(+)(out). NDH-1 shuttles electrons from an unknown electron donor, via FMN and iron-sulfur (Fe-S) centers, to quinones in the respiratory and/or the photosynthetic chain. The immediate electron acceptor for the enzyme in this species is believed to be plastoquinone. Couples the redox reaction to proton translocation, and thus conserves the redox energy in a proton gradient. Cyanobacterial NDH-1 also plays a role in inorganic carbon-concentration. In Synechocystis sp. (strain ATCC 27184 / PCC 6803 / Kazusa), this protein is NAD(P)H-quinone oxidoreductase subunit K 2.